Reading from the N-terminus, the 81-residue chain is Pyruvate synthase subunit PorD (81 aa).

2 consecutive 4Fe-4S ferredoxin-type domains span residues 25-50 (FKPVLDKDKCIDCDNCILFCPEGCIN) and 51-80 (REHEIDYDYCKGCGICAEKCPVKAIKMERE). Residues cysteine 34, cysteine 37, cysteine 40, cysteine 44, cysteine 60, cysteine 63, cysteine 66, and cysteine 70 each coordinate [4Fe-4S] cluster.

In terms of assembly, heterotetramer of one alpha, one beta, one delta and one gamma chain. [4Fe-4S] cluster serves as cofactor.

The sequence is that of Pyruvate synthase subunit PorD (porD) from Methanothermobacter thermautotrophicus (strain ATCC 29096 / DSM 1053 / JCM 10044 / NBRC 100330 / Delta H) (Methanobacterium thermoautotrophicum).